Consider the following 313-residue polypeptide: Dehydrodolichyl diphosphate synthase CPT5, chloroplastic (313 aa).

The N-terminal 42 residues, 1–42 (MAFSFQLQQVFPFPVKFCSQPKSIKLQIFPNLTKRLPIHPLA), are a transit peptide targeting the chloroplast. The active site involves Asp89.

It belongs to the UPP synthase family. Requires Mg(2+) as cofactor. In terms of tissue distribution, expressed in leaf trichomes, stem trichomes and old leaves. Expressed at low levels in young leaves and flowers.

It localises to the plastid. The protein resides in the chloroplast. The enzyme catalyses n isopentenyl diphosphate + (2E,6E)-farnesyl diphosphate = a di-trans,poly-cis-polyprenyl diphosphate + n diphosphate. Functionally, catalyzes cis-prenyl chain elongation to produce the polyprenyl backbone of dolichol, a glycosyl carrier-lipid required for the biosynthesis of several classes of glycoprotein. This Solanum lycopersicum (Tomato) protein is Dehydrodolichyl diphosphate synthase CPT5, chloroplastic.